Here is a 168-residue protein sequence, read N- to C-terminus: Ribosome maturation factor RimM (168 aa).

Residues Glu-93–Ile-167 form the PRC barrel domain.

The protein belongs to the RimM family. In terms of assembly, binds ribosomal protein uS19.

It localises to the cytoplasm. In terms of biological role, an accessory protein needed during the final step in the assembly of 30S ribosomal subunit, possibly for assembly of the head region. Essential for efficient processing of 16S rRNA. May be needed both before and after RbfA during the maturation of 16S rRNA. It has affinity for free ribosomal 30S subunits but not for 70S ribosomes. The polypeptide is Ribosome maturation factor RimM (Wolbachia sp. subsp. Brugia malayi (strain TRS)).